The sequence spans 209 residues: V-type ATP synthase subunit D (209 aa).

Belongs to the V-ATPase D subunit family.

In terms of biological role, produces ATP from ADP in the presence of a proton gradient across the membrane. The protein is V-type ATP synthase subunit D of Anaeromyxobacter dehalogenans (strain 2CP-C).